The chain runs to 329 residues: NAC domain-containing protein 71 (329 aa).

The region spanning 9 to 166 (LPPGFRFHPT…DWVLCRIYNK (158 aa)) is the NAC domain. A disordered region spans residues 228–281 (RSGSADRDSMPRLHTDSSGSEHVLSPSPSPDDFPGGGDHDYAESQPSGGCGGWP). Residues 230-242 (GSADRDSMPRLHT) show a composition bias toward basic and acidic residues.

As to quaternary structure, interacts with NAC048 and NAC002. Expressed in roots and embryo. Weakly expressed in callus.

Its subcellular location is the nucleus. Transcription activator that binds to the promoter of the stress response gene LEA19. Involved in tolerance to abiotic stresses. The chain is NAC domain-containing protein 71 from Oryza sativa subsp. japonica (Rice).